The following is a 414-amino-acid chain: Glutamyl-tRNA reductase (414 aa).

Substrate contacts are provided by residues Thr-49–Arg-52, Ser-108, Glu-113–Gln-115, and Gln-119. Cys-50 functions as the Nucleophile in the catalytic mechanism. Residue Gly-188–Gly-193 participates in NADP(+) binding.

It belongs to the glutamyl-tRNA reductase family. In terms of assembly, homodimer.

The enzyme catalyses (S)-4-amino-5-oxopentanoate + tRNA(Glu) + NADP(+) = L-glutamyl-tRNA(Glu) + NADPH + H(+). It functions in the pathway porphyrin-containing compound metabolism; protoporphyrin-IX biosynthesis; 5-aminolevulinate from L-glutamyl-tRNA(Glu): step 1/2. In terms of biological role, catalyzes the NADPH-dependent reduction of glutamyl-tRNA(Glu) to glutamate 1-semialdehyde (GSA). This Francisella tularensis subsp. holarctica (strain LVS) protein is Glutamyl-tRNA reductase.